The chain runs to 333 residues: MNSILPCQDQYFVGGQSYNCPYSTTTSESGVDVSKETWVSFWAAGLLDNTELQQAPQVLESPSELSFPVLDSCSWEEAQLSSQLYRNKQLQDTLLQKEEELARLHEENNHLRQYLNSTLVKRLEEKAKKLLSSDEFSKVFGKLRKEKRKPKEHRHSPAEIPQFKTAKRNLSTEFSNCEEQPGPHVDPWVLQTLGLKDLNTIDDTLPANYSATTSHPRAVPSISSLFVHDANGYANVPRDLHLDYVGQGTHGSHTTSIHQEDCHSFPRLSNPPVRVQTLPYHTADVSPNKTEMAFSTSLSPHCNVKTHSFHQGQAFVRRDEEGGWKFTWVPKQT.

Residues 83 to 118 (QLYRNKQLQDTLLQKEEELARLHEENNHLRQYLNST) are a coiled coil. The segment covering 145–154 (KEKRKPKEHR) has biased composition (basic residues). The segment at 145 to 165 (KEKRKPKEHRHSPAEIPQFKT) is disordered.

The protein belongs to the GEMC1 family. In terms of processing, highly phosphorylated by CDK2; stimulates initiation of DNA replication.

Its subcellular location is the nucleus. Functionally, regulator of DNA replication. Promotes initiation of chromosomal DNA replication by mediating TOPBP1- and CDK2-dependent recruitment of CDC45L onto replication origins. The polypeptide is Geminin coiled-coil domain-containing protein 1 (Gmnc) (Mus musculus (Mouse)).